A 64-amino-acid polypeptide reads, in one-letter code: MKIEVKDNNIEQALRVLKRKLQRDGFFKVVKLKSVYEKPSEKKKRILQENIKRVKKLNKLKNRI.

This sequence belongs to the bacterial ribosomal protein bS21 family.

In Pelagibacter ubique (strain HTCC1062), this protein is Small ribosomal subunit protein bS21.